A 328-amino-acid polypeptide reads, in one-letter code: Adenosine receptor A1 (328 aa).

Residues methionine 1–alanine 10 lie on the Extracellular side of the membrane. A helical transmembrane segment spans residues alanine 11 to alanine 33. Residues valine 34–cysteine 46 are Cytoplasmic-facing. Residues phenylalanine 47 to isoleucine 69 form a helical membrane-spanning segment. The Extracellular portion of the chain corresponds to asparagine 70–cysteine 80. Cysteine 80 and cysteine 169 form a disulfide bridge. The chain crosses the membrane as a helical span at residues leucine 81–alanine 102. Residues valine 103 to arginine 123 are Cytoplasmic-facing. Residues alanine 124–tryptophan 146 traverse the membrane as a helical segment. The Extracellular portion of the chain corresponds to asparagine 147 to serine 176. Asparagine 159 carries N-linked (GlcNAc...) asparagine glycosylation. The helical transmembrane segment at methionine 177 to leucine 201 threads the bilayer. At glutamate 202–serine 235 the chain is on the cytoplasmic side. The chain crosses the membrane as a helical span at residues leucine 236–phenylalanine 259. Residues cysteine 260–serine 267 are Extracellular-facing. The helical transmembrane segment at isoleucine 268–isoleucine 292 threads the bilayer. Topologically, residues histidine 293–aspartate 328 are cytoplasmic. Residue cysteine 309 is the site of S-palmitoyl cysteine attachment.

This sequence belongs to the G-protein coupled receptor 1 family.

Its subcellular location is the cell membrane. Functionally, receptor for adenosine. The activity of this receptor is mediated by G proteins which inhibit adenylyl cyclase. The polypeptide is Adenosine receptor A1 (ADORA1) (Oryctolagus cuniculus (Rabbit)).